The chain runs to 127 residues: Protein ApaG (127 aa).

In terms of domain architecture, ApaG spans 3–127 (DDPRYRVEVE…FVLSVPRTLH (125 aa)).

This Xanthomonas oryzae pv. oryzae (strain MAFF 311018) protein is Protein ApaG.